The sequence spans 877 residues: Leucine--tRNA ligase (877 aa).

The 'HIGH' region motif lies at 48–58 (PYPSGKLHMGH). Positions 636–640 (KMSKS) match the 'KMSKS' region motif. Lys639 contributes to the ATP binding site.

It belongs to the class-I aminoacyl-tRNA synthetase family.

The protein localises to the cytoplasm. The catalysed reaction is tRNA(Leu) + L-leucine + ATP = L-leucyl-tRNA(Leu) + AMP + diphosphate. This Ralstonia nicotianae (strain ATCC BAA-1114 / GMI1000) (Ralstonia solanacearum) protein is Leucine--tRNA ligase.